Consider the following 595-residue polypeptide: Probable xyloglucan glycosyltransferase 9 (595 aa).

2 helical membrane passes run 30-50 and 77-97; these read AFVV…INGW and ATYV…LFLI. The active site involves D177. The substrate site is built by D236 and D238. The active site involves D330. 4 helical membrane-spanning segments follow: residues 408–428, 433–453, 545–564, and 570–590; these read LILP…TMFV, LPDW…ILPS, IYKK…ARSL, and IHFY…LDLI.

Belongs to the glycosyltransferase 2 family. Plant cellulose synthase-like C subfamily.

The protein localises to the golgi apparatus membrane. In terms of biological role, probable beta-1,4-glucan synthase rather involved in the synthesis of the xyloglucan backbone than cellulose. Seems to work simultaneously with xyloglucan 6-xylosyltransferase. Xyloglucan is a noncellulosic polysaccharides of plant cell wall and consists of a glucan backbone substituted by xylose, galactose and fucose. The polypeptide is Probable xyloglucan glycosyltransferase 9 (CSLC9) (Oryza sativa subsp. japonica (Rice)).